Reading from the N-terminus, the 363-residue chain is Glycerol-3-phosphate dehydrogenase [NAD(+)], cytoplasmic (363 aa).

NAD(+)-binding positions include 11–16 (GSGNWG), Phe98, Lys121, and Ala155. Lys121 is a binding site for substrate. Lys206 functions as the Proton acceptor in the catalytic mechanism. Arg270 and Gln299 together coordinate NAD(+). Position 270 to 271 (270 to 271 (RN)) interacts with substrate.

It belongs to the NAD-dependent glycerol-3-phosphate dehydrogenase family. Homodimer. Isoform GPDH-1 is predominant in thorax and isoform GPDH-3 in abdomen.

The protein localises to the cytoplasm. The enzyme catalyses sn-glycerol 3-phosphate + NAD(+) = dihydroxyacetone phosphate + NADH + H(+). The protein operates within phospholipid metabolism; alpha-glycerophosphate cycle. The polypeptide is Glycerol-3-phosphate dehydrogenase [NAD(+)], cytoplasmic (Drosophila melanogaster (Fruit fly)).